The primary structure comprises 231 residues: S-norcoclaurine synthase 1 (231 aa).

107–109 (YKE) is a binding site for dopamine. The active-site Proton donor is K121. D140 is a binding site for (4-hydroxyphenyl)acetaldehyde. A helical transmembrane segment spans residues 210–230 (LLLCLIICLVIAGGMFVAGVP).

It belongs to the BetVI family. Detected in roots, stems, leaves, flower buds and germinating seeds.

The protein localises to the membrane. The enzyme catalyses (4-hydroxyphenyl)acetaldehyde + dopamine = (S)-norcoclaurine + H2O. It functions in the pathway alkaloid biosynthesis; (S)-reticuline biosynthesis. With respect to regulation, activity doubles within 5 hours of elicitor treatment and continues to increase for at least 80 hours. Its function is as follows. Involved in the biosynthesis of (S)-coclaurine, the common precursor of all benzylisoquinoline alkaloids such as morphine, sanguinarine, codeine or papaverine. Condenses dopamine and 4-hydroxyphenylacetaldehyde. This chain is S-norcoclaurine synthase 1, found in Papaver somniferum (Opium poppy).